The primary structure comprises 483 residues: Probable glycine dehydrogenase (decarboxylating) subunit 2 (483 aa).

Residues methionine 1 to arginine 33 form a disordered region. Lysine 264 is subject to N6-(pyridoxal phosphate)lysine.

The protein belongs to the GcvP family. C-terminal subunit subfamily. In terms of assembly, the glycine cleavage system is composed of four proteins: P, T, L and H. In this organism, the P 'protein' is a heterodimer of two subunits. Pyridoxal 5'-phosphate serves as cofactor.

It carries out the reaction N(6)-[(R)-lipoyl]-L-lysyl-[glycine-cleavage complex H protein] + glycine + H(+) = N(6)-[(R)-S(8)-aminomethyldihydrolipoyl]-L-lysyl-[glycine-cleavage complex H protein] + CO2. The glycine cleavage system catalyzes the degradation of glycine. The P protein binds the alpha-amino group of glycine through its pyridoxal phosphate cofactor; CO(2) is released and the remaining methylamine moiety is then transferred to the lipoamide cofactor of the H protein. This Nitrosomonas europaea (strain ATCC 19718 / CIP 103999 / KCTC 2705 / NBRC 14298) protein is Probable glycine dehydrogenase (decarboxylating) subunit 2.